A 191-amino-acid polypeptide reads, in one-letter code: Cytochrome c oxidase assembly protein CtaG (191 aa).

At 1 to 9 (MALNGPQKT) the chain is on the cytoplasmic side. The chain crosses the membrane as a helical; Signal-anchor for type II membrane protein span at residues 10 to 30 (VVQLVSVVVVMGGLAWASVPF). The Periplasmic segment spans residues 31–191 (YDWFCRVTGF…LDAGEKTNTN (161 aa)).

The protein belongs to the COX11/CtaG family.

It is found in the cell inner membrane. Exerts its effect at some terminal stage of cytochrome c oxidase synthesis, probably by being involved in the insertion of the copper B into subunit I. This is Cytochrome c oxidase assembly protein CtaG from Ruegeria pomeroyi (strain ATCC 700808 / DSM 15171 / DSS-3) (Silicibacter pomeroyi).